The chain runs to 676 residues: Protein cereblon (676 aa).

Over residues 1-11 the composition is skewed to acidic residues; the sequence is MDDEETAEIDE. Disordered stretches follow at residues 1 to 78, 118 to 194, and 249 to 276; these read MDDE…TTAH, EDAG…AVPR, and DDAN…LDVD. Composition is skewed to low complexity over residues 12–33 and 125–139; these read TSSS…TETA and VPQN…TPPA. Polar residues predominate over residues 156–177; sequence LVNNDSPSQASISSRHSGSDMS. Residues 314-542 enclose the Lon N-terminal domain; the sequence is RMLIFMHQHI…IIGTTLKHES (229 aa). The 110-residue stretch at 541 to 650 folds into the CULT domain; that stretch reads ESLFYCRYCN…LAGSSVRIGK (110 aa). Zn(2+) is bound by residues cysteine 546, cysteine 549, cysteine 615, and cysteine 618.

It belongs to the CRBN family. In terms of assembly, likely a component of a DCX (DDB1-CUL4-X-box) protein ligase complex. May interact with pic/DDB1. In terms of processing, ubiquitinated.

The protein localises to the nucleus. The protein operates within protein modification; protein ubiquitination. Functionally, substrate recognition component of a DCX (DDB1-CUL4-X-box) E3 protein ligase complex that mediates the ubiquitination and subsequent proteasomal degradation of target proteins. Has an essential role in mediating growth by negatively regulating insulin signaling. It also has a role in maintaining presynaptic function in the neuromuscular junction synapses of third-instar larvae. This is Protein cereblon from Drosophila mojavensis (Fruit fly).